Here is a 223-residue protein sequence, read N- to C-terminus: MKLIKPLTCALALAMSGMAFADVTVSVPDDVSVLAANGEKAKLSGGFFASEKALTLPDGVNQVVFRYAPYFNQGNDRLSVESDVIVARFDTANAELTIEVPKYRNMRDAEENIKDLDWKLVDGSGKAVAVDQDKLIKPGMQIGRDYVREIEDYNRAGGTAAVAFAGAATMQPVTLPAKIPEDMKQARATAVKADSTAEEMLHFWYQKADAETKARFKAYINQQ.

Residues 1–21 (MKLIKPLTCALALAMSGMAFA) form the signal peptide.

It belongs to the UPF0319 family.

This is UPF0319 protein VPA1584 from Vibrio parahaemolyticus serotype O3:K6 (strain RIMD 2210633).